Reading from the N-terminus, the 617-residue chain is ATP-dependent RNA helicase DBP1 (617 aa).

The segment at 1–90 (MADLPQKVSN…TSANYNRGGS (90 aa)) is disordered. Positions 7 to 17 (KVSNLSINNKE) are enriched in polar residues. A compositionally biased stretch (basic and acidic residues) spans 38-58 (PSFERSTPKQEDKVTGGDFFR). Over residues 79–90 (GGTSANYNRGGS) the composition is skewed to polar residues. The Q motif signature appears at 154–182 (LDFSSPPLDELLMENIKLASFTKPTPVQK). The Helicase ATP-binding domain occupies 185–374 (IPIVTKGRDL…RDFLDNYIFL (190 aa)). An ATP-binding site is contributed by 198 to 205 (AQTGSGKT). The DEAD box signature appears at 318 to 321 (DEAD). Residues 385 to 545 (NITQRILYVD…EVPTFLSDLS (161 aa)) form the Helicase C-terminal domain. A disordered region spans residues 542 to 617 (SDLSRQNSRG…GYGNSNASWW (76 aa)). The segment covering 580–594 (FGSTRPRNTGTSNWG) has biased composition (polar residues).

This sequence belongs to the DEAD box helicase family. DDX3/DED1 subfamily.

It localises to the cytoplasm. The enzyme catalyses ATP + H2O = ADP + phosphate + H(+). Functionally, ATP-binding RNA helicase involved in translation initiation. Remodels RNA in response to ADP and ATP concentrations by facilitating disruption, but also formation of RNA duplexes. Redundant to DED1, may be required in conditions in which DED1 expression is decreased. The sequence is that of ATP-dependent RNA helicase DBP1 (DBP1) from Saccharomyces cerevisiae (strain YJM789) (Baker's yeast).